A 266-amino-acid chain; its full sequence is Putative carbamate hydrolase RutD (266 aa).

The AB hydrolase-1 domain occupies 15 to 128 (AVLLSSGLGG…NAHSARCFDA (114 aa)).

Belongs to the AB hydrolase superfamily. Hydrolase RutD family.

The catalysed reaction is carbamate + 2 H(+) = NH4(+) + CO2. Its function is as follows. Involved in pyrimidine catabolism. May facilitate the hydrolysis of carbamate, a reaction that can also occur spontaneously. The polypeptide is Putative carbamate hydrolase RutD (Variovorax paradoxus (strain S110)).